A 161-amino-acid polypeptide reads, in one-letter code: S-protein homolog 2 (161 aa).

Residues 1 to 24 (MDIPKQYLSLFILIIFITTKLSQA) form the signal peptide. Residues N75, N106, and N157 are each glycosylated (N-linked (GlcNAc...) asparagine).

The protein belongs to the plant self-incompatibility (S1) protein family.

The protein localises to the secreted. The protein is S-protein homolog 2 of Arabidopsis thaliana (Mouse-ear cress).